The primary structure comprises 82 residues: MMAKLMITVMTVFFLSLQQGADGLFERWRKNQMAASRIMGNLITARLDPPGYCTHKICYEDGECNQWCTAGCNPDTGKCDTT.

An N-terminal signal peptide occupies residues 1 to 23 (MMAKLMITVMTVFFLSLQQGADG). Residues 24 to 46 (LFERWRKNQMAASRIMGNLITAR) constitute a propeptide that is removed on maturation. 4-hydroxyproline is present on residues Pro49 and Pro50. Intrachain disulfides connect Cys53/Cys68, Cys58/Cys72, and Cys64/Cys79. A 4-carboxyglutamate mark is found at Glu60 and Glu63.

The protein belongs to the Pg turripeptide superfamily. In terms of tissue distribution, expressed by the venom duct.

The protein localises to the secreted. This chain is Turripeptide Gsg9.1, found in Gemmula sogodensis (Gem-turris).